A 299-amino-acid polypeptide reads, in one-letter code: N-carbamoylputrescine amidase (299 aa).

Positions 10 to 268 (VVVSSLQFAC…EAVLVAQFDL (259 aa)) constitute a CN hydrolase domain. The active-site Proton acceptor is the E49. The active-site Proton donor is K122. C159 serves as the catalytic Nucleophile.

This sequence belongs to the carbon-nitrogen hydrolase superfamily. As to quaternary structure, homooctamer (isoform 2). As to expression, expressed in roots, stems, leaves and flowers.

It catalyses the reaction N-carbamoylputrescine + H2O + 2 H(+) = putrescine + NH4(+) + CO2. The protein operates within amine and polyamine biosynthesis; putrescine biosynthesis via agmatine pathway; putrescine from N-carbamoylputrescine (amidase route): step 1/1. Its function is as follows. Involved in polyamine biosynthesis. Catalyzes the hydrolysis of N-carbamoylputrescine to produce putrescine and ammonia. The polypeptide is N-carbamoylputrescine amidase (Arabidopsis thaliana (Mouse-ear cress)).